The primary structure comprises 209 residues: uncharacterized protein (209 aa).

This is an uncharacterized protein from Sulfolobus islandicus rod-shaped virus 1 (SIRV-1).